The chain runs to 466 residues: Glutamate decarboxylase beta (466 aa).

Substrate is bound by residues threonine 62 and asparagine 83. Residues 126–127 (SS), threonine 212, and histidine 275 contribute to the pyridoxal 5'-phosphate site. Lysine 276 carries the post-translational modification N6-(pyridoxal phosphate)lysine. N6-acetyllysine is present on residues lysine 446, lysine 453, and lysine 464.

This sequence belongs to the group II decarboxylase family. Homohexamer composed of three dimers. It depends on pyridoxal 5'-phosphate as a cofactor.

It carries out the reaction L-glutamate + H(+) = 4-aminobutanoate + CO2. Converts glutamate to gamma-aminobutyrate (GABA), consuming one intracellular proton in the reaction. The gad system helps to maintain a near-neutral intracellular pH when cells are exposed to extremely acidic conditions. The ability to survive transit through the acidic conditions of the stomach is essential for successful colonization of the mammalian host by commensal and pathogenic bacteria. This Escherichia coli O6:H1 (strain CFT073 / ATCC 700928 / UPEC) protein is Glutamate decarboxylase beta (gadB).